The following is a 321-amino-acid chain: Ribosomal RNA small subunit methyltransferase H (321 aa).

S-adenosyl-L-methionine is bound by residues 44-46 (GGH), Asp-64, Phe-88, Asp-109, and Gln-116.

This sequence belongs to the methyltransferase superfamily. RsmH family.

It localises to the cytoplasm. The enzyme catalyses cytidine(1402) in 16S rRNA + S-adenosyl-L-methionine = N(4)-methylcytidine(1402) in 16S rRNA + S-adenosyl-L-homocysteine + H(+). Functionally, specifically methylates the N4 position of cytidine in position 1402 (C1402) of 16S rRNA. This chain is Ribosomal RNA small subunit methyltransferase H, found in Methylobacillus flagellatus (strain ATCC 51484 / DSM 6875 / VKM B-1610 / KT).